We begin with the raw amino-acid sequence, 144 residues long: uncharacterized protein (144 aa).

Residues 4–111 form the HIT domain; sequence VFCAIIAGEA…LPPRNGDKLS (108 aa). The short motif at 96-100 is the Histidine triad motif element; that stretch reads HVHLH.

This is an uncharacterized protein from Mycobacterium tuberculosis (strain CDC 1551 / Oshkosh).